The following is a 499-amino-acid chain: Pleckstrin homology domain-containing family O member 2 (499 aa).

Basic and acidic residues predominate over residues 1-11; it reads MEEEGVKEGGQ. The tract at residues 1-21 is disordered; the sequence is MEEEGVKEGGQRPRSAQTADK. The PH domain maps to 18-119; that stretch reads TADKAGWIKK…WIKALNEGIN (102 aa). Ser-167 bears the Phosphoserine mark. The interval 170–419 is disordered; the sequence is LSRLDLDVPD…RRRQPGEQLH (250 aa). Pro residues predominate over residues 201-212; sequence RPPMPPAKPSPA. Over residues 229 to 238 the composition is skewed to low complexity; sequence SAPAPVPASS. Ser-237 and Ser-238 each carry phosphoserine. Over residues 246-258 the composition is skewed to acidic residues; sequence EDLETPVVEDSDS. The residue at position 273 (Ser-273) is a Phosphoserine. 2 positions are modified to phosphothreonine: Thr-298 and Thr-311. Low complexity-rich tracts occupy residues 329–349 and 367–386; these read EASGPAQSPGASEASAPGPAE and AAGPPGTPPKAATTSTTLPP. Ser-399 carries the post-translational modification Phosphoserine. Residues 416–492 are a coiled coil; sequence EQLHRAQLEV…LREKRRELVT (77 aa).

This is Pleckstrin homology domain-containing family O member 2 (PLEKHO2) from Bos taurus (Bovine).